Reading from the N-terminus, the 457-residue chain is F-box/LRR-repeat protein At3g62440 (457 aa).

Residues methionine 1–serine 49 form the F-box domain. LRR repeat units lie at residues glycine 53–tryptophan 79, leucine 147–histidine 174, phenylalanine 177–glycine 202, tryptophan 229–aspartate 254, tryptophan 283–threonine 310, and leucine 337–glycine 362.

This Arabidopsis thaliana (Mouse-ear cress) protein is F-box/LRR-repeat protein At3g62440.